Consider the following 290-residue polypeptide: uncharacterized protein (290 aa).

Belongs to the glycosyltransferase 2 family.

This is an uncharacterized protein from Methanocaldococcus jannaschii (strain ATCC 43067 / DSM 2661 / JAL-1 / JCM 10045 / NBRC 100440) (Methanococcus jannaschii).